The primary structure comprises 271 residues: Protein FAM110D (271 aa).

Residues 1–13 (MLLSSPTTPSRGR) are compositionally biased toward polar residues. 3 disordered regions span residues 1-84 (MLLS…PDSL), 118-149 (DAAPSSPAPTERPGAPAGWAGSPDTPEATGKR), and 186-242 (PQSW…GRPT).

This sequence belongs to the FAM110 family.

The protein is Protein FAM110D of Mus musculus (Mouse).